An 83-amino-acid chain; its full sequence is Toxin To15 (83 aa).

Residues 1–19 (MKGIILLISCLMLIEVVVG) form the signal peptide. Residues 21–82 (KEGYPLDSSG…IWNAKTNKCY (62 aa)) form the LCN-type CS-alpha/beta domain. Intrachain disulfides connect Cys31–Cys81, Cys35–Cys57, Cys43–Cys62, and Cys47–Cys64.

Belongs to the long (4 C-C) scorpion toxin superfamily. Sodium channel inhibitor family. Beta subfamily. Expressed by the venom gland.

Its subcellular location is the secreted. Beta toxins bind voltage-independently at site-4 of sodium channels (Nav) and shift the voltage of activation toward more negative potentials thereby affecting sodium channel activation and promoting spontaneous and repetitive firing. The protein is Toxin To15 of Tityus obscurus (Amazonian scorpion).